The chain runs to 276 residues: Borealin (276 aa).

A disordered region spans residues 111 to 158; that stretch reads KEAKSSANSEDENMAPLKSTMKKKKASKKAPSTSKKPRTLSISKQGGT.

It belongs to the borealin family. In terms of assembly, component of the CPC complex.

Its subcellular location is the nucleus. The protein resides in the chromosome. It is found in the centromere. The protein localises to the cytoplasm. It localises to the cytoskeleton. Its subcellular location is the spindle. In terms of biological role, component of the chromosomal passenger complex (CPC), a complex that acts as a key regulator of mitosis. The CPC complex has essential functions at the centromere in ensuring correct chromosome alignment and segregation and is required for chromatin-induced microtubule stabilization and spindle assembly. The chain is Borealin (cdca8) from Danio rerio (Zebrafish).